The following is a 772-amino-acid chain: Potassium transporter 24 (772 aa).

The Cytoplasmic portion of the chain corresponds to 1 to 23; sequence MDVEGGGAAARRKGGWWWWREEA. The helical transmembrane segment at 24–44 threads the bilayer; it reads VLAYQSLGVVYGEVAAAPLYV. At 45 to 66 the chain is on the extracellular side; it reads YRSAFAGGDIEHSAGNEEIYGA. Residues 67 to 87 traverse the membrane as a helical segment; the sequence is LSLVFWTLTLVPLAKYVLLVL. Over 88-150 the chain is Cytoplasmic; sequence RADDAGEGGT…ALERHRVLQR (63 aa). Residues 151-171 traverse the membrane as a helical segment; it reads LLLLLALLGTCMVIGDGVLTP. Residues 172 to 192 lie on the Extracellular side of the membrane; sequence AVSVFSAVSGLELSMDKDQHK. The helical transmembrane segment at 193-213 threads the bilayer; it reads YILLPITCVILVCLFALQHYG. Topologically, residues 214-216 are cytoplasmic; it reads THR. The chain crosses the membrane as a helical span at residues 217-237; sequence VGFLFAPIVCLWLLCISIIGV. The Extracellular portion of the chain corresponds to 238-265; sequence YNIIHWNPHVYQALSPYYMYKFLRKTQT. The chain crosses the membrane as a helical span at residues 266–286; sequence GGWMSLGGILLCVTGSEAMYA. Over 287–298 the chain is Cytoplasmic; it reads DLGHFTQNSIKM. The helical transmembrane segment at 299-319 threads the bilayer; sequence AFTLLVYPALVLAYMGQAAYI. The Extracellular segment spans residues 320-344; it reads SRHHNFEDGSHIGFYVSVPEKIRWP. Residues 345-365 form a helical membrane-spanning segment; that stretch reads VLGIAILASVVGSQAIITGTF. The Cytoplasmic segment spans residues 366–392; it reads SIIKQCSSLNCFPRVKIVHTSSTVHGQ. The chain crosses the membrane as a helical span at residues 393–413; that stretch reads IYIPEINWILMILCLSVTIGF. Residues 414-423 are Extracellular-facing; it reads RDTKHLTNAQ. Residues 424–444 form a helical membrane-spanning segment; it reads GLAVITVMLVTTCLMSLVILL. Over 445–449 the chain is Cytoplasmic; that stretch reads CWNKS. A helical transmembrane segment spans residues 450–470; the sequence is IVYALSFLLFFGAIEVIYFAA. Residues 471–477 are Extracellular-facing; it reads SLVKFHE. The helical transmembrane segment at 478–498 threads the bilayer; the sequence is GAWVPVTLSFIFMMVMCVWHY. Residues 499–772 are Cytoplasmic-facing; it reads GTKKKYEFDV…TVEVGMICLV (274 aa). Residues 656–684 are disordered; that stretch reads EEGEFDGSDSTGSSAHKEINPNTTAPKPK.

It belongs to the HAK/KUP transporter (TC 2.A.72.3) family.

It is found in the membrane. In terms of biological role, high-affinity potassium transporter. This Oryza sativa subsp. japonica (Rice) protein is Potassium transporter 24 (HAK24).